A 164-amino-acid polypeptide reads, in one-letter code: MERFLENAMYTSRWLLAPVYFGLSLGLVALTIKFFQEIVHVLPHIFSVSESELILTLLSLVDMTLVGGLLVMVMFSGYENFVSQLDINEGKEKLSWLGKMDATSLKNKVAASIVAISSIHLLRVFMDAKNVPDNKLMWYVIIHLTFVLSAFVMGYLDRLNKVKH.

The next 4 membrane-spanning stretches (helical) occupy residues 15 to 35 (LLAPVYFGLSLGLVALTIKFF), 53 to 73 (LILTLLSLVDMTLVGGLLVMV), 109 to 126 (VAASIVAISSIHLLRVFM), and 136 to 156 (LMWYVIIHLTFVLSAFVMGYL).

Belongs to the UPF0114 family.

Its subcellular location is the cell membrane. The protein is UPF0114 protein KPK_0696 of Klebsiella pneumoniae (strain 342).